A 279-amino-acid chain; its full sequence is Tryptophan synthase alpha chain (279 aa).

Active-site proton acceptor residues include Glu50 and Asp61.

This sequence belongs to the TrpA family. Tetramer of two alpha and two beta chains.

The catalysed reaction is (1S,2R)-1-C-(indol-3-yl)glycerol 3-phosphate + L-serine = D-glyceraldehyde 3-phosphate + L-tryptophan + H2O. It participates in amino-acid biosynthesis; L-tryptophan biosynthesis; L-tryptophan from chorismate: step 5/5. Functionally, the alpha subunit is responsible for the aldol cleavage of indoleglycerol phosphate to indole and glyceraldehyde 3-phosphate. This chain is Tryptophan synthase alpha chain, found in Brucella suis (strain ATCC 23445 / NCTC 10510).